Consider the following 462-residue polypeptide: Golgi-associated PDZ and coiled-coil motif-containing protein (462 aa).

Positions 83–194 form a coiled coil; sequence KAQSVSQINH…EDEALRGHIA (112 aa). The PDZ domain occupies 288 to 371; sequence KVLLLKEDHE…EIEFEVVYVA (84 aa). The disordered stretch occupies residues 427 to 449; that stretch reads TDTHENGDLGTASETPLDDGASK.

As to quaternary structure, homooligomer. Interacts with FZD5. Interacts with FZD8. Interacts with GRID2 and BECN1. Interacts with CSPG5. Interacts with CLCN3. Interacts with STX6. Interacts with CFTR. Interacts with ASIC3. Interacts with GOLGA3. Interacts with NLGN1. Interacts with RHOQ. Interacts with MARCHF2; the interaction leads to CFTR ubiquitination and degradation. May interact with CACNG2. Interacts with CCDC62.

Its subcellular location is the cytoplasm. The protein localises to the golgi apparatus membrane. The protein resides in the golgi apparatus. It localises to the trans-Golgi network membrane. It is found in the synapse. Its subcellular location is the postsynaptic density. The protein localises to the cell projection. The protein resides in the dendrite. Its function is as follows. Plays a role in intracellular protein trafficking and degradation. May regulate CFTR chloride currents and acid-induced ASIC3 currents by modulating cell surface expression of both channels. May also regulate the intracellular trafficking of the ADR1B receptor. May play a role in autophagy. Together with MARCHF2 mediates the ubiquitination and lysosomal degradation of CFTR. Overexpression results in CFTR intracellular retention and degradation in the lysosomes. In Pongo abelii (Sumatran orangutan), this protein is Golgi-associated PDZ and coiled-coil motif-containing protein (GOPC).